Here is a 520-residue protein sequence, read N- to C-terminus: 2-isopropylmalate synthase (520 aa).

One can recognise a Pyruvate carboxyltransferase domain in the interval 12–274 (IRIFDTTLRD…DTAINTPRIV (263 aa)). 4 residues coordinate Mn(2+): Asp21, His209, His211, and Asn245. A regulatory domain region spans residues 396 to 520 (RLASMTISDV…VVAGKTAAVA (125 aa)).

The protein belongs to the alpha-IPM synthase/homocitrate synthase family. LeuA type 1 subfamily. As to quaternary structure, homodimer. Mn(2+) serves as cofactor.

It localises to the cytoplasm. It carries out the reaction 3-methyl-2-oxobutanoate + acetyl-CoA + H2O = (2S)-2-isopropylmalate + CoA + H(+). It functions in the pathway amino-acid biosynthesis; L-leucine biosynthesis; L-leucine from 3-methyl-2-oxobutanoate: step 1/4. Functionally, catalyzes the condensation of the acetyl group of acetyl-CoA with 3-methyl-2-oxobutanoate (2-ketoisovalerate) to form 3-carboxy-3-hydroxy-4-methylpentanoate (2-isopropylmalate). This chain is 2-isopropylmalate synthase, found in Xanthomonas campestris pv. campestris (strain B100).